The chain runs to 107 residues: Ig kappa chain V-VI region TEPC 601/TEPC 191 (107 aa).

Residues 1–23 (EIVLTQSPAITAASLGQKVTITC) are framework-1. Cysteines 23 and 87 form a disulfide. The complementarity-determining-1 stretch occupies residues 24–33 (SASSSVSYMH). Residues 34 to 48 (WYQQKSGTSPKPWIY) are framework-2. Positions 49–55 (EISKLAS) are complementarity-determining-2. The tract at residues 56 to 87 (GVPARFSGSGSGTSYSLTISSMEAEDAAIYYC) is framework-3. A complementarity-determining-3 region spans residues 88-96 (QQWNYPLIT). The interval 97–106 (FGAGTKLELK) is framework-4.

The protein is Ig kappa chain V-VI region TEPC 601/TEPC 191 of Mus musculus (Mouse).